A 98-amino-acid chain; its full sequence is Post-transcriptional regulator ComN (98 aa).

As to quaternary structure, interacts directly with DivIVA.

It localises to the cytoplasm. Functionally, required for post-transcription initiation control of the comE operon. Promotes the accumulation of its target comE mRNA to septal and polar sites. The chain is Post-transcriptional regulator ComN (comN) from Bacillus subtilis (strain 168).